The primary structure comprises 502 residues: Actin-binding protein WASF3 (502 aa).

Residues 57–93 (NEANNFYIRANSLQDRIDRLAVKVTQLDSTVEEVSLQ) adopt a coiled-coil conformation. Tyr-151 is modified (phosphotyrosine; by ABL1). A coiled-coil region spans residues 162-206 (KEKMLQDTEDKRKEKRRQKEQKRIDGTTREVKKVRKARNRRQEWN). Disordered regions lie at residues 169 to 210 (TEDK…MMAY) and 223 to 443 (SVYH…ARSD). The span at 182–192 (QKRIDGTTREV) shows a compositional bias: basic and acidic residues. Over residues 223-237 (SVYHGASSEGSLSPD) the composition is skewed to polar residues. Tyr-248 bears the Phosphotyrosine; by ABL1 mark. Residues 302 to 312 (QQPPPPPPPQA) are compositionally biased toward pro residues. Phosphotyrosine; by ABL1 is present on Tyr-337. Composition is skewed to pro residues over residues 341-352 (SGPPPPPPPPVI) and 394-410 (APPP…PPGP). The span at 411–423 (GSSLSSSPMHGPP) shows a compositional bias: low complexity. The WH2 domain maps to 440–457 (ARSDLLAAIRMGIQLKKV). At Tyr-486 the chain carries Phosphotyrosine; by ABL1.

Belongs to the SCAR/WAVE family. Binds actin and the Arp2/3 complex. In terms of processing, phosphorylation by ABL1 promotes lamellipodia formation and cell migration. As to expression, expressed in ovary and brain.

The protein localises to the cytoplasm. It localises to the cytoskeleton. Its function is as follows. Downstream effector molecules involved in the transmission of signals from tyrosine kinase receptors and small GTPases to the actin cytoskeleton. Plays a role in the regulation of cell morphology and cytoskeletal organization. Required in the control of cell shape. The chain is Actin-binding protein WASF3 (WASF3) from Homo sapiens (Human).